The chain runs to 310 residues: 4-hydroxy-3-methylbut-2-enyl diphosphate reductase (310 aa).

Cysteine 12 serves as a coordination point for [4Fe-4S] cluster. Histidine 41 and histidine 74 together coordinate (2E)-4-hydroxy-3-methylbut-2-enyl diphosphate. The dimethylallyl diphosphate site is built by histidine 41 and histidine 74. Histidine 41 and histidine 74 together coordinate isopentenyl diphosphate. Cysteine 96 is a binding site for [4Fe-4S] cluster. Position 124 (histidine 124) interacts with (2E)-4-hydroxy-3-methylbut-2-enyl diphosphate. Residue histidine 124 coordinates dimethylallyl diphosphate. Histidine 124 is a binding site for isopentenyl diphosphate. Glutamate 126 serves as the catalytic Proton donor. Threonine 167 provides a ligand contact to (2E)-4-hydroxy-3-methylbut-2-enyl diphosphate. A [4Fe-4S] cluster-binding site is contributed by cysteine 197. Residues serine 225, serine 226, asparagine 227, and serine 269 each contribute to the (2E)-4-hydroxy-3-methylbut-2-enyl diphosphate site. Dimethylallyl diphosphate contacts are provided by serine 225, serine 226, asparagine 227, and serine 269. Isopentenyl diphosphate-binding residues include serine 225, serine 226, asparagine 227, and serine 269.

It belongs to the IspH family. The cofactor is [4Fe-4S] cluster.

The catalysed reaction is isopentenyl diphosphate + 2 oxidized [2Fe-2S]-[ferredoxin] + H2O = (2E)-4-hydroxy-3-methylbut-2-enyl diphosphate + 2 reduced [2Fe-2S]-[ferredoxin] + 2 H(+). It carries out the reaction dimethylallyl diphosphate + 2 oxidized [2Fe-2S]-[ferredoxin] + H2O = (2E)-4-hydroxy-3-methylbut-2-enyl diphosphate + 2 reduced [2Fe-2S]-[ferredoxin] + 2 H(+). The protein operates within isoprenoid biosynthesis; dimethylallyl diphosphate biosynthesis; dimethylallyl diphosphate from (2E)-4-hydroxy-3-methylbutenyl diphosphate: step 1/1. It functions in the pathway isoprenoid biosynthesis; isopentenyl diphosphate biosynthesis via DXP pathway; isopentenyl diphosphate from 1-deoxy-D-xylulose 5-phosphate: step 6/6. Its function is as follows. Catalyzes the conversion of 1-hydroxy-2-methyl-2-(E)-butenyl 4-diphosphate (HMBPP) into a mixture of isopentenyl diphosphate (IPP) and dimethylallyl diphosphate (DMAPP). Acts in the terminal step of the DOXP/MEP pathway for isoprenoid precursor biosynthesis. This chain is 4-hydroxy-3-methylbut-2-enyl diphosphate reductase, found in Tolumonas auensis (strain DSM 9187 / NBRC 110442 / TA 4).